The sequence spans 503 residues: L-amino-acid oxidase (503 aa).

An N-terminal signal peptide occupies residues 1 to 18 (MNVFFMFSLLFLAALGSC). A disulfide bond links Cys-28 and Cys-191. FAD is bound by residues 61-62 (MS), 81-82 (EA), Arg-89, and 105-108 (GPMR). Arg-108 serves as a coordination point for substrate. Asn-190 carries an N-linked (GlcNAc...) asparagine glycan. Substrate is bound at residue His-241. Val-279 contributes to the FAD binding site. A disulfide bridge connects residues Cys-349 and Cys-430. Tyr-390 is a substrate binding site. FAD contacts are provided by residues Glu-475 and 482 to 487 (GWIDST). Substrate is bound at residue 482–483 (GW).

The protein belongs to the flavin monoamine oxidase family. FIG1 subfamily. As to quaternary structure, homodimer; non-covalently linked. Requires FAD as cofactor. N-glycosylated. The enzymatic activity is not affected by deglycosylation. Expressed by the venom gland.

The protein localises to the secreted. The enzyme catalyses an L-alpha-amino acid + O2 + H2O = a 2-oxocarboxylate + H2O2 + NH4(+). The catalysed reaction is L-leucine + O2 + H2O = 4-methyl-2-oxopentanoate + H2O2 + NH4(+). It catalyses the reaction L-phenylalanine + O2 + H2O = 3-phenylpyruvate + H2O2 + NH4(+). It carries out the reaction L-methionine + O2 + H2O = 4-methylsulfanyl-2-oxobutanoate + H2O2 + NH4(+). The enzyme catalyses L-isoleucine + O2 + H2O = (S)-3-methyl-2-oxopentanoate + H2O2 + NH4(+). Functionally, catalyzes an oxidative deamination of predominantly hydrophobic and aromatic L-amino acids, thus producing hydrogen peroxide that may contribute to the diverse toxic effects of this enzyme. Is highly active on L-Met, L-Leu, L-Phe and L-Ile. Exhibits diverse biological activities, such as antibacterial on both Gram-positive and Gram-negative bacteria and antiparasitic activities, as well as induction of platelet aggregation. Effects of snake L-amino oxidases on platelets are controversial, since they either induce aggregation or inhibit agonist-induced aggregation. These different effects are probably due to different experimental conditions. This protein may also have activities in hemorrhage, hemolysis, edema, and apoptosis. In Bothrops pauloensis (Neuwied's lancehead), this protein is L-amino-acid oxidase.